A 326-amino-acid chain; its full sequence is N-acetyl-gamma-glutamyl-phosphate reductase (326 aa).

Residue cysteine 155 is part of the active site.

It belongs to the NAGSA dehydrogenase family. Type 1 subfamily.

The protein localises to the cytoplasm. The enzyme catalyses N-acetyl-L-glutamate 5-semialdehyde + phosphate + NADP(+) = N-acetyl-L-glutamyl 5-phosphate + NADPH + H(+). It participates in amino-acid biosynthesis; L-arginine biosynthesis; N(2)-acetyl-L-ornithine from L-glutamate: step 3/4. Its function is as follows. Catalyzes the NADPH-dependent reduction of N-acetyl-5-glutamyl phosphate to yield N-acetyl-L-glutamate 5-semialdehyde. The chain is N-acetyl-gamma-glutamyl-phosphate reductase from Shewanella loihica (strain ATCC BAA-1088 / PV-4).